Reading from the N-terminus, the 259-residue chain is Small ribosomal subunit protein eS1 (259 aa).

Position 2 is an N-acetylalanine; partial (Ala2).

This sequence belongs to the eukaryotic ribosomal protein eS1 family. As to quaternary structure, component of the small ribosomal subunit. Mature ribosomes consist of a small (40S) and a large (60S) subunit. The 40S subunit contains about 33 different proteins and 1 molecule of RNA (18S). The 60S subunit contains about 49 different proteins and 3 molecules of RNA (25S, 5.8S and 5S).

The protein resides in the cytoplasm. This chain is Small ribosomal subunit protein eS1, found in Cryptococcus neoformans var. neoformans serotype D (strain B-3501A) (Filobasidiella neoformans).